The primary structure comprises 144 residues: L-fucose mutarotase (144 aa).

The active-site Proton donor is the H22. Substrate-binding positions include D30, R109, and 131 to 133 (YGN).

It belongs to the RbsD / FucU family. FucU mutarotase subfamily. In terms of assembly, homodecamer.

The protein resides in the cytoplasm. It catalyses the reaction alpha-L-fucose = beta-L-fucose. It participates in carbohydrate metabolism; L-fucose metabolism. Involved in the anomeric conversion of L-fucose. The protein is L-fucose mutarotase of Actinobacillus pleuropneumoniae serotype 5b (strain L20).